Reading from the N-terminus, the 934-residue chain is MAGKLRVHELAKKLGVTSKELLATLKEQGEFVKTASSTVEPPVVKKMKQFYGVAQESKPTTPPSPLAQAGSVPDSTQRGPKPGAKPAAKPEAAPKPGTAAAKPSAKPSPAAAAKAAPAAKATPTPAEAAPKPGQAAAKPAAKPGQKPARAAGKPGPKPGPKPGARPQRVANNPFSSTTERPPRPRGGATPGDMPRPGGTRGGAGRGQAPRPGARPAQGQGRGQGTAKPGAARQGGGRRPSPAMMPATPSPGQMPAKSAAGFGGGRGRGGRPGGPGGPGGPGGPGPRGGRGGRRGGTAGAFGRPGGPPRRGRKSKRQKRNEYEAMQAPKVVGGVKLPSGNGEKIRLARGASLADFADKINADAAALVQALFNLGEMVTATQSVSDETLQLLGDEMDYKVEVVSPEDEDRELLESFDLQFGEDEGDDEDLAQRPPVVTVMGHVDHGKTRLLDTIRKENVGSGEAGGITQHIGAYQVSVNMEGVERPVTFLDTPGHEAFTAMRARGAKSTDIAILVVAADDGVMPQTVEAINHAKAAEVPVVVAVNKIDKPTAQPDKIRGQLTEYGLVPEEYGGDTMFVDISAKQGQNIDQLLEAVLLTADASLDLRANPDMDAQGIAIEAHLDRGRGPVATIIVQRGTLRVGDSIVVGDAYGRVRRMIDEHGNDVQEAGPSRPVQVLGLTSVSGAGDNLLVVDEDRTARQIADRRDARRRNALAARSRKRVSLEDLDEVLKETSTLNLILKGDNAGTVEALEDALLKIEVDDEVALNIIDRGVGAVTETNVHLAAASDAVIIGFNVRSEGKATEAANAEGVDIRYYSIIYKAIEEIEAALKGMLKPIYEEKEIGTAEIRQIFKASAVGLIAGCMVETGKVRRNAKVRLVRDGKVISEDATIDSLRREKDDVTEVSHGYECGMVLSYPNIEVGDRIEAYEMVEVPRD.

Residues 54-323 are disordered; it reads AQESKPTTPP…KRQKRNEYEA (270 aa). 4 stretches are compositionally biased toward low complexity: residues 80–154, 185–197, 206–231, and 238–250; these read PKPG…AGKP, RGGA…PRPG, GQAP…PGAA, and RPSP…TPSP. Positions 260–303 are enriched in gly residues; sequence GFGGGRGRGGRPGGPGGPGGPGGPGPRGGRGGRRGGTAGAFGRP. A compositionally biased stretch (basic residues) spans 308-317; the sequence is RRGRKSKRQK. The tr-type G domain maps to 430–602; that stretch reads QRPPVVTVMG…VLLTADASLD (173 aa). The G1 stretch occupies residues 439 to 446; sequence GHVDHGKT. A GTP-binding site is contributed by 439–446; the sequence is GHVDHGKT. The segment at 464 to 468 is G2; that stretch reads GITQH. The G3 stretch occupies residues 489-492; the sequence is DTPG. Residues 489–493 and 543–546 each bind GTP; these read DTPGH and NKID. The tract at residues 543–546 is G4; it reads NKID. A G5 region spans residues 579–581; that stretch reads SAK.

This sequence belongs to the TRAFAC class translation factor GTPase superfamily. Classic translation factor GTPase family. IF-2 subfamily.

The protein localises to the cytoplasm. Its function is as follows. One of the essential components for the initiation of protein synthesis. Protects formylmethionyl-tRNA from spontaneous hydrolysis and promotes its binding to the 30S ribosomal subunits. Also involved in the hydrolysis of GTP during the formation of the 70S ribosomal complex. This is Translation initiation factor IF-2 from Corynebacterium urealyticum (strain ATCC 43042 / DSM 7109).